A 130-amino-acid chain; its full sequence is Small ribosomal subunit protein uS8 (130 aa).

It belongs to the universal ribosomal protein uS8 family. As to quaternary structure, part of the 30S ribosomal subunit. Contacts proteins S5 and S12.

Functionally, one of the primary rRNA binding proteins, it binds directly to 16S rRNA central domain where it helps coordinate assembly of the platform of the 30S subunit. This chain is Small ribosomal subunit protein uS8, found in Erwinia tasmaniensis (strain DSM 17950 / CFBP 7177 / CIP 109463 / NCPPB 4357 / Et1/99).